Reading from the N-terminus, the 365-residue chain is Probable ethanolamine-phosphate cytidylyltransferase (365 aa).

A disordered region spans residues 344-365; the sequence is EERQRRKMGKNATEQTTIKTYA. The segment covering 355–365 has biased composition (polar residues); sequence ATEQTTIKTYA.

Belongs to the cytidylyltransferase family.

The catalysed reaction is phosphoethanolamine + CTP + H(+) = CDP-ethanolamine + diphosphate. It participates in phospholipid metabolism; phosphatidylethanolamine biosynthesis; phosphatidylethanolamine from ethanolamine: step 2/3. The sequence is that of Probable ethanolamine-phosphate cytidylyltransferase from Schizosaccharomyces pombe (strain 972 / ATCC 24843) (Fission yeast).